Here is a 668-residue protein sequence, read N- to C-terminus: Probable potassium transport system protein Kup (668 aa).

Transmembrane regions (helical) follow at residues 17–37 (GILV…LYVM), 59–79 (VSLI…VIAL), 104–124 (IIPA…TPAV), 148–168 (TIIV…QRFG), 175–195 (AFGP…LMNF), 221–241 (LGLF…ALYS), 256–276 (PYIK…LLTV), 299–319 (ILVF…QALI), 350–370 (MYIP…VLAF), 380–400 (YGLS…FYLL), 403–423 (IPAW…VVFF), and 430–450 (FFHG…IMII).

The protein belongs to the HAK/KUP transporter (TC 2.A.72) family.

It is found in the cell membrane. It carries out the reaction K(+)(in) + H(+)(in) = K(+)(out) + H(+)(out). Its function is as follows. Transport of potassium into the cell. Likely operates as a K(+):H(+) symporter. This Enterococcus faecalis (strain ATCC 700802 / V583) protein is Probable potassium transport system protein Kup.